Reading from the N-terminus, the 265-residue chain is MAKSRFEYVKQFERENFLLPDTYLIVRVDGKGFHKFSEEYEFSKPNDIRALKVMNNAAKNLMAQFPDIMMAYGDSDEYSFLLRRKCSLFERREMKLVSTFASFISVNYLYEWNLEFPEKQIRLERLPTFDARIVVYPTIKHIRDYFSWRQVDCHINNLYNTTFWTLVIKGGMTGREAENKLLGTVSSDKNEMLFKEFGINYNNESEIFKKGTILVREYDYTREGDDLSKRQQQRVEKQRKKASIEEYHLDIIGDTFWNERPWLLE.

Aspartate 29, glycine 30, and aspartate 76 together coordinate Mg(2+). Residues 29 to 34 and 75 to 76 each bind GTP; these read DGKGFH and SD.

It belongs to the tRNA(His) guanylyltransferase family. The cofactor is Mg(2+).

The enzyme catalyses a 5'-end ribonucleotide-tRNA(His) + GTP + ATP + H2O = a 5'-end phospho-guanosine-ribonucleotide-tRNA(His) + AMP + 2 diphosphate + H(+). Functionally, adds a GMP to the 5'-end of tRNA(His) after transcription and RNase P cleavage. This chain is tRNA(His) guanylyltransferase (THG1), found in Debaryomyces hansenii (strain ATCC 36239 / CBS 767 / BCRC 21394 / JCM 1990 / NBRC 0083 / IGC 2968) (Yeast).